Consider the following 282-residue polypeptide: Small ribosomal subunit protein uS3 (282 aa).

In terms of domain architecture, KH type-2 spans 43–111 (IRRLMSKGME…QVQLNILEVK (69 aa)). Residues 217 to 282 (AQSQAAAPRA…IGKGSNGTEA (66 aa)) are disordered. Residues 228–240 (RRNERGDRPDRGA) are compositionally biased toward basic and acidic residues. The span at 256-269 (AVATGSAPTGTAAT) shows a compositional bias: low complexity.

This sequence belongs to the universal ribosomal protein uS3 family. As to quaternary structure, part of the 30S ribosomal subunit. Forms a tight complex with proteins S10 and S14.

Binds the lower part of the 30S subunit head. Binds mRNA in the 70S ribosome, positioning it for translation. The chain is Small ribosomal subunit protein uS3 from Kineococcus radiotolerans (strain ATCC BAA-149 / DSM 14245 / SRS30216).